A 225-amino-acid chain; its full sequence is 3-dehydroquinate dehydratase (225 aa).

3-dehydroquinate contacts are provided by residues glutamate 30–arginine 32 and arginine 62. Catalysis depends on histidine 118, which acts as the Proton donor/acceptor. Lysine 143 (schiff-base intermediate with substrate) is an active-site residue. 2 residues coordinate 3-dehydroquinate: arginine 186 and glutamine 209.

Belongs to the type-I 3-dehydroquinase family. In terms of assembly, homodimer.

It carries out the reaction 3-dehydroquinate = 3-dehydroshikimate + H2O. It participates in metabolic intermediate biosynthesis; chorismate biosynthesis; chorismate from D-erythrose 4-phosphate and phosphoenolpyruvate: step 3/7. Involved in the third step of the chorismate pathway, which leads to the biosynthesis of aromatic amino acids. Catalyzes the cis-dehydration of 3-dehydroquinate (DHQ) and introduces the first double bond of the aromatic ring to yield 3-dehydroshikimate. The sequence is that of 3-dehydroquinate dehydratase from Streptococcus agalactiae serotype Ia (strain ATCC 27591 / A909 / CDC SS700).